A 212-amino-acid polypeptide reads, in one-letter code: Anaphase-promoting complex subunit 10 (212 aa).

The DOC domain occupies 12–196; it reads MDEEERTSSR…PSAVLEARPG (185 aa).

The protein belongs to the APC10 family. As to quaternary structure, the APC/C complex is probably composed of at least 12 subunits: apc-2, apc-10, apc-11, cdc-26, emb-1, emb-27, emb-30, mat-1, mat-2, mat-3, such-1 and gfi-3.

The protein operates within protein modification; protein ubiquitination. In terms of biological role, probable component of the anaphase promoting complex/cyclosome (APC/C), a cell cycle-regulated E3 ubiquitin ligase that controls progression through mitosis and the G1 phase of the cell cycle. The APC/C complex acts by mediating ubiquitination and subsequent degradation of target proteins. This is Anaphase-promoting complex subunit 10 from Caenorhabditis elegans.